Here is a 99-residue protein sequence, read N- to C-terminus: Aspartyl/glutamyl-tRNA(Asn/Gln) amidotransferase subunit C (99 aa).

The protein belongs to the GatC family. Heterotrimer of A, B and C subunits.

The enzyme catalyses L-glutamyl-tRNA(Gln) + L-glutamine + ATP + H2O = L-glutaminyl-tRNA(Gln) + L-glutamate + ADP + phosphate + H(+). It catalyses the reaction L-aspartyl-tRNA(Asn) + L-glutamine + ATP + H2O = L-asparaginyl-tRNA(Asn) + L-glutamate + ADP + phosphate + 2 H(+). Its function is as follows. Allows the formation of correctly charged Asn-tRNA(Asn) or Gln-tRNA(Gln) through the transamidation of misacylated Asp-tRNA(Asn) or Glu-tRNA(Gln) in organisms which lack either or both of asparaginyl-tRNA or glutaminyl-tRNA synthetases. The reaction takes place in the presence of glutamine and ATP through an activated phospho-Asp-tRNA(Asn) or phospho-Glu-tRNA(Gln). This Burkholderia ambifaria (strain MC40-6) protein is Aspartyl/glutamyl-tRNA(Asn/Gln) amidotransferase subunit C.